The following is a 292-amino-acid chain: ATP synthase gamma chain (292 aa).

Belongs to the ATPase gamma chain family. In terms of assembly, F-type ATPases have 2 components, CF(1) - the catalytic core - and CF(0) - the membrane proton channel. CF(1) has five subunits: alpha(3), beta(3), gamma(1), delta(1), epsilon(1). CF(0) has three main subunits: a, b and c.

The protein resides in the cell membrane. Produces ATP from ADP in the presence of a proton gradient across the membrane. The gamma chain is believed to be important in regulating ATPase activity and the flow of protons through the CF(0) complex. The chain is ATP synthase gamma chain from Streptococcus mutans serotype c (strain ATCC 700610 / UA159).